The sequence spans 95 residues: Large ribosomal subunit protein uL23 (95 aa).

Belongs to the universal ribosomal protein uL23 family. In terms of assembly, part of the 50S ribosomal subunit. Contacts protein L29, and trigger factor when it is bound to the ribosome.

Its function is as follows. One of the early assembly proteins it binds 23S rRNA. One of the proteins that surrounds the polypeptide exit tunnel on the outside of the ribosome. Forms the main docking site for trigger factor binding to the ribosome. This is Large ribosomal subunit protein uL23 from Anoxybacillus flavithermus (strain DSM 21510 / WK1).